A 200-amino-acid chain; its full sequence is Small ribosomal subunit protein uS4 (200 aa).

Residues Thr-22–Lys-42 form a disordered region. Positions Ala-92–Val-155 constitute an S4 RNA-binding domain.

It belongs to the universal ribosomal protein uS4 family. Part of the 30S ribosomal subunit. Contacts protein S5. The interaction surface between S4 and S5 is involved in control of translational fidelity.

Its function is as follows. One of the primary rRNA binding proteins, it binds directly to 16S rRNA where it nucleates assembly of the body of the 30S subunit. Functionally, with S5 and S12 plays an important role in translational accuracy. The polypeptide is Small ribosomal subunit protein uS4 (Bacillus velezensis (strain DSM 23117 / BGSC 10A6 / LMG 26770 / FZB42) (Bacillus amyloliquefaciens subsp. plantarum)).